Reading from the N-terminus, the 691-residue chain is Elongation factor G (691 aa).

The tr-type G domain maps to 12-286; sequence KKLRNIGIMA…GILEYLPSPL (275 aa). Residues 21-28, 85-89, and 139-142 contribute to the GTP site; these read AHIDAGKT, DTPGH, and NKMD.

The protein belongs to the TRAFAC class translation factor GTPase superfamily. Classic translation factor GTPase family. EF-G/EF-2 subfamily.

It is found in the cytoplasm. Functionally, catalyzes the GTP-dependent ribosomal translocation step during translation elongation. During this step, the ribosome changes from the pre-translocational (PRE) to the post-translocational (POST) state as the newly formed A-site-bound peptidyl-tRNA and P-site-bound deacylated tRNA move to the P and E sites, respectively. Catalyzes the coordinated movement of the two tRNA molecules, the mRNA and conformational changes in the ribosome. The polypeptide is Elongation factor G (Thermosipho africanus (strain TCF52B)).